Reading from the N-terminus, the 118-residue chain is Large ribosomal subunit protein bL19 (118 aa).

Belongs to the bacterial ribosomal protein bL19 family.

Its function is as follows. This protein is located at the 30S-50S ribosomal subunit interface and may play a role in the structure and function of the aminoacyl-tRNA binding site. This is Large ribosomal subunit protein bL19 from Dictyoglomus turgidum (strain DSM 6724 / Z-1310).